A 379-amino-acid polypeptide reads, in one-letter code: Cytochrome b (379 aa).

Helical transmembrane passes span 34–54 (FGSL…LLAM), 78–99 (WLIR…YLHI), 114–134 (WNTG…GYVL), and 179–199 (FFAL…IHLT). Positions 84 and 98 each coordinate heme b. The heme b site is built by His-183 and His-197. A ubiquinone is bound at residue His-202. 4 helical membrane passes run 227–247 (LKDI…AFFS), 289–309 (LGGV…PFLH), 321–341 (LSQM…WIGS), and 348–368 (FIII…ILFP).

This sequence belongs to the cytochrome b family. The cytochrome bc1 complex contains 11 subunits: 3 respiratory subunits (MT-CYB, CYC1 and UQCRFS1), 2 core proteins (UQCRC1 and UQCRC2) and 6 low-molecular weight proteins (UQCRH/QCR6, UQCRB/QCR7, UQCRQ/QCR8, UQCR10/QCR9, UQCR11/QCR10 and a cleavage product of UQCRFS1). This cytochrome bc1 complex then forms a dimer. Requires heme b as cofactor.

It is found in the mitochondrion inner membrane. In terms of biological role, component of the ubiquinol-cytochrome c reductase complex (complex III or cytochrome b-c1 complex) that is part of the mitochondrial respiratory chain. The b-c1 complex mediates electron transfer from ubiquinol to cytochrome c. Contributes to the generation of a proton gradient across the mitochondrial membrane that is then used for ATP synthesis. This chain is Cytochrome b (MT-CYB), found in Dromaius novaehollandiae (Emu).